The following is a 107-amino-acid chain: Serine-rich and transmembrane domain-containing protein 1 (107 aa).

The helical transmembrane segment at 43–63 threads the bilayer; sequence IYVSIFLSLLAFLLLLLIIAL.

The protein localises to the membrane. The sequence is that of Serine-rich and transmembrane domain-containing protein 1 (SERTM1) from Homo sapiens (Human).